The sequence spans 335 residues: MAEGGSPDGRAGPGSAGRNLKEWLREQFCDHPLEHCEDTRLHDAAYVGDLQTLRSLLQEESYRSRINEKSVWCCGWLPCTPLRIAATAGHGSCVDFLIRKGAEVDLVDVKGQTALYVAVVNGHLESTQILLEAGADPNGSRHHRSTPVYHASRVGRADILKALIRYGADVDVNHHLTPDVQPRFSRRLTSLVVCPLYISAAYHNLQCFRLLLLAGANPDFNCNGPVNTQGFYRGSPGCVMDAVLRHGCEAAFVSLLVEFGANLNLVKWESLGPESRGRRKVDPEALQVFKEARSVPRTLLCLCRVAVRRALGKHRLHLIPSLPLPDPIKKFLLHE.

ANK repeat units follow at residues 36-68 (CEDT…RINE), 77-106 (LPCT…EVDL), 110-139 (KGQT…DPNG), 143-172 (HRST…DVDV), 191-220 (LVVC…NPDF), and 235-265 (SPGC…NLNL). Residues 286–335 (LQVFKEARSVPRTLLCLCRVAVRRALGKHRLHLIPSLPLPDPIKKFLLHE) enclose the SOCS box domain.

The protein belongs to the ankyrin SOCS box (ASB) family. In terms of assembly, interacts with CUL5 and RNF7. Interacts with TAB2 and TAB3.

It is found in the cytoplasm. It participates in protein modification; protein ubiquitination. Probable substrate-recognition component of a SCF-like ECS (Elongin-Cullin-SOCS-box protein) E3 ligase complex which mediates the ubiquitination and subsequent proteasomal degradation of target proteins. Mediates Notch-induced ubiquitination and degradation of TCF3/E2A and JAK2. Functions as a tumor suppressor by enhancing CHCHD3 'Lys-48'-linked ubiquitination, leading to inhibition of the CHCHD3/ROS signaling pathway. Suppresses TAB2-linked 'Lys-48' polyubiquitination and consequently facilitates the initiation of NF-kappa-B and MAPK signaling cascades. May play a role in testis development. This chain is Ankyrin repeat and SOCS box protein 1 (ASB1), found in Homo sapiens (Human).